A 696-amino-acid polypeptide reads, in one-letter code: Elongation factor G 2 (696 aa).

The tr-type G domain maps to S5 to T281. Residues A14 to T21, D78 to H82, and N132 to D135 each bind GTP.

It belongs to the TRAFAC class translation factor GTPase superfamily. Classic translation factor GTPase family. EF-G/EF-2 subfamily.

The protein resides in the cytoplasm. Catalyzes the GTP-dependent ribosomal translocation step during translation elongation. During this step, the ribosome changes from the pre-translocational (PRE) to the post-translocational (POST) state as the newly formed A-site-bound peptidyl-tRNA and P-site-bound deacylated tRNA move to the P and E sites, respectively. Catalyzes the coordinated movement of the two tRNA molecules, the mRNA and conformational changes in the ribosome. This is Elongation factor G 2 from Vibrio parahaemolyticus serotype O3:K6 (strain RIMD 2210633).